A 365-amino-acid polypeptide reads, in one-letter code: Chorismate synthase (365 aa).

NADP(+) is bound at residue Arg-46. Residues 123–125, 241–242, Gly-281, 296–300, and Arg-322 each bind FMN; these read RSS, NG, and KPTPS.

It belongs to the chorismate synthase family. In terms of assembly, homotetramer. It depends on FMNH2 as a cofactor.

It carries out the reaction 5-O-(1-carboxyvinyl)-3-phosphoshikimate = chorismate + phosphate. Its pathway is metabolic intermediate biosynthesis; chorismate biosynthesis; chorismate from D-erythrose 4-phosphate and phosphoenolpyruvate: step 7/7. In terms of biological role, catalyzes the anti-1,4-elimination of the C-3 phosphate and the C-6 proR hydrogen from 5-enolpyruvylshikimate-3-phosphate (EPSP) to yield chorismate, which is the branch point compound that serves as the starting substrate for the three terminal pathways of aromatic amino acid biosynthesis. This reaction introduces a second double bond into the aromatic ring system. The chain is Chorismate synthase from Helicobacter pylori (strain ATCC 700392 / 26695) (Campylobacter pylori).